Reading from the N-terminus, the 189-residue chain is Probable nicotinate-nucleotide adenylyltransferase (189 aa).

This sequence belongs to the NadD family.

It catalyses the reaction nicotinate beta-D-ribonucleotide + ATP + H(+) = deamido-NAD(+) + diphosphate. The protein operates within cofactor biosynthesis; NAD(+) biosynthesis; deamido-NAD(+) from nicotinate D-ribonucleotide: step 1/1. Functionally, catalyzes the reversible adenylation of nicotinate mononucleotide (NaMN) to nicotinic acid adenine dinucleotide (NaAD). This is Probable nicotinate-nucleotide adenylyltransferase from Staphylococcus aureus (strain MRSA252).